The sequence spans 58 residues: Large ribosomal subunit protein bL32 (58 aa).

A disordered region spans residues M1–A24.

Belongs to the bacterial ribosomal protein bL32 family.

This chain is Large ribosomal subunit protein bL32, found in Synechococcus sp. (strain ATCC 27144 / PCC 6301 / SAUG 1402/1) (Anacystis nidulans).